Reading from the N-terminus, the 491-residue chain is Cytochrome P450 2F2 (491 aa).

Residue Cys-436 coordinates heme.

The protein belongs to the cytochrome P450 family. Requires heme as cofactor.

It is found in the endoplasmic reticulum membrane. The protein localises to the microsome membrane. Functionally, involved in the regio- and stereoselective transformation of naphthalene to trans-1R-hydroxy-2R-glutathionyl-1,2-dihydronaphthalene in the presence of glutathione and glutathione S-transferases. It specifically catalyzes the production of a very reactive and potentially toxic intermediate, the 2R,2S arene oxide, that is associated with necrosis of the unciliated bronchiolar epithelial cells or club cells in lung. This Rattus norvegicus (Rat) protein is Cytochrome P450 2F2 (Cyp2f2).